The sequence spans 111 residues: Small ribosomal subunit protein bS16 (111 aa).

The protein belongs to the bacterial ribosomal protein bS16 family.

The chain is Small ribosomal subunit protein bS16 from Rickettsia africae (strain ESF-5).